The chain runs to 449 residues: MNKMLYIKTYGCQMNVYDSNRMVDLLETQGYNIVANMADASVIILNTCHIREKASEKMYSELGRIKKLQQSRLKAGKSKAKIIVAGCVGQAEGEEIFIREPAVNIIVGPQSYYNLPTMLEKLDSGTENHLIDLDFVEAAKFNKLPEVLKSPTVSGLVSVQEGCDKFCTFCVVPYTRGAEFSRPLEQVYREVLNIAQQGAKEVVLVGQNVSAYHGKDENGKECSLADLIKYVAKIDKIKRIRYITSHPNDMTDQLLSLHATEEKLMPFLHLPVQSGSNKILKLMNRRHSRERYLEIIQQLRELRPDIVISSDIIVGFPGEDDEDFEATLSLAKEARFGQCYSFKYSQRPGTPAAVKQQISEEVKQHRLSILQAQLMQQQLECNQKLIGKVVPVLFDRDGKYDGQIIGKTPYMQSVCIMNEKDNNLYGKIVNVKILTASASSLFGEVYADS.

Positions 3 to 124 constitute an MTTase N-terminal domain; sequence KMLYIKTYGC…LPTMLEKLDS (122 aa). [4Fe-4S] cluster-binding residues include C12, C48, C87, C163, C167, and C170. The Radical SAM core domain maps to 149–380; sequence KSPTVSGLVS…QAQLMQQQLE (232 aa). The 65-residue stretch at 383 to 447 folds into the TRAM domain; the sequence is QKLIGKVVPV…ASSLFGEVYA (65 aa).

Belongs to the methylthiotransferase family. MiaB subfamily. In terms of assembly, monomer. The cofactor is [4Fe-4S] cluster.

The protein localises to the cytoplasm. The enzyme catalyses N(6)-dimethylallyladenosine(37) in tRNA + (sulfur carrier)-SH + AH2 + 2 S-adenosyl-L-methionine = 2-methylsulfanyl-N(6)-dimethylallyladenosine(37) in tRNA + (sulfur carrier)-H + 5'-deoxyadenosine + L-methionine + A + S-adenosyl-L-homocysteine + 2 H(+). Functionally, catalyzes the methylthiolation of N6-(dimethylallyl)adenosine (i(6)A), leading to the formation of 2-methylthio-N6-(dimethylallyl)adenosine (ms(2)i(6)A) at position 37 in tRNAs that read codons beginning with uridine. This Orientia tsutsugamushi (strain Ikeda) (Rickettsia tsutsugamushi) protein is tRNA-2-methylthio-N(6)-dimethylallyladenosine synthase.